The primary structure comprises 273 residues: 3-methyl-2-oxobutanoate hydroxymethyltransferase (273 aa).

Residues D53 and D92 each coordinate Mg(2+). Residues 53-54, D92, and K120 contribute to the 3-methyl-2-oxobutanoate site; that span reads DS. Position 122 (E122) interacts with Mg(2+). E189 serves as the catalytic Proton acceptor.

It belongs to the PanB family. In terms of assembly, homodecamer; pentamer of dimers. Mg(2+) is required as a cofactor.

Its subcellular location is the cytoplasm. The enzyme catalyses 3-methyl-2-oxobutanoate + (6R)-5,10-methylene-5,6,7,8-tetrahydrofolate + H2O = 2-dehydropantoate + (6S)-5,6,7,8-tetrahydrofolate. It functions in the pathway cofactor biosynthesis; (R)-pantothenate biosynthesis; (R)-pantoate from 3-methyl-2-oxobutanoate: step 1/2. Functionally, catalyzes the reversible reaction in which hydroxymethyl group from 5,10-methylenetetrahydrofolate is transferred onto alpha-ketoisovalerate to form ketopantoate. This Cupriavidus necator (strain ATCC 17699 / DSM 428 / KCTC 22496 / NCIMB 10442 / H16 / Stanier 337) (Ralstonia eutropha) protein is 3-methyl-2-oxobutanoate hydroxymethyltransferase.